The chain runs to 49 residues: DNA-directed RNA polymerase subunit Rpo12 (49 aa).

3 residues coordinate Zn(2+): Cys-11, Cys-27, and Cys-30.

Belongs to the archaeal Rpo12/eukaryotic RPC10 RNA polymerase subunit family. As to quaternary structure, part of the RNA polymerase complex. Zn(2+) is required as a cofactor.

The protein localises to the cytoplasm. It carries out the reaction RNA(n) + a ribonucleoside 5'-triphosphate = RNA(n+1) + diphosphate. DNA-dependent RNA polymerase (RNAP) catalyzes the transcription of DNA into RNA using the four ribonucleoside triphosphates as substrates. The polypeptide is DNA-directed RNA polymerase subunit Rpo12 (Thermococcus onnurineus (strain NA1)).